Reading from the N-terminus, the 214-residue chain is Ribonuclease T (214 aa).

The Exonuclease domain occupies 20–195; sequence VVVDVETAGF…YDTQQTAELF (176 aa). 4 residues coordinate Mg(2+): Asp23, Glu25, His182, and Asp187. The active-site Proton donor/acceptor is His182.

The protein belongs to the RNase T family. As to quaternary structure, homodimer. It depends on Mg(2+) as a cofactor.

Functionally, trims short 3' overhangs of a variety of RNA species, leaving a one or two nucleotide 3' overhang. Responsible for the end-turnover of tRNA: specifically removes the terminal AMP residue from uncharged tRNA (tRNA-C-C-A). Also appears to be involved in tRNA biosynthesis. In Vibrio campbellii (strain ATCC BAA-1116), this protein is Ribonuclease T.